Here is a 311-residue protein sequence, read N- to C-terminus: Cytochrome f (311 aa).

The N-terminal stretch at 1–27 (MRRHLSLVLGSLVIGLALLIAPGASWA) is a signal peptide. The heme site is built by Y28, C48, C51, and H52. A helical transmembrane segment spans residues 277-297 (IYGLLAFFAAVAIAQIMLVLK).

Belongs to the cytochrome f family. In terms of assembly, the 4 large subunits of the cytochrome b6-f complex are cytochrome b6, subunit IV (17 kDa polypeptide, PetD), cytochrome f and the Rieske protein, while the 4 small subunits are PetG, PetL, PetM and PetN. The complex functions as a dimer. It depends on heme as a cofactor.

The protein resides in the cellular thylakoid membrane. Component of the cytochrome b6-f complex, which mediates electron transfer between photosystem II (PSII) and photosystem I (PSI), cyclic electron flow around PSI, and state transitions. The polypeptide is Cytochrome f (Synechococcus sp. (strain CC9902)).